Consider the following 1222-residue polypeptide: Alpha-mannosidase D (1222 aa).

The N-terminal stretch at 1 to 21 (MESSKFVKIIWVFGIWILVFT) is a signal peptide. Over 22 to 1170 (FLIIYNNYDY…KYNRPNHLAL (1149 aa)) the chain is Extracellular. Positions 71 and 73 each coordinate Zn(2+). Asn175 is a glycosylation site (N-linked (GlcNAc...) asparagine). Zn(2+) contacts are provided by Asp185 and His453. Asp185 serves as the catalytic Nucleophile. Asn492, Asn496, Asn547, Asn551, Asn566, Asn613, Asn665, Asn768, Asn785, Asn952, Asn981, Asn1069, and Asn1084 each carry an N-linked (GlcNAc...) asparagine glycan. Positions 493–549 (KSNNKTNNNNNNNNKNNNNNNNNNNNNNNNLKNTNSISTTGSSSSSGSGSSNNNNNT) are enriched in low complexity. Residues 493-554 (KSNNKTNNNN…NNNNTVNKSE (62 aa)) form a disordered region. A helical transmembrane segment spans residues 1171 to 1191 (ILSLSIGIPAGILIIVIALVV). Residues 1192 to 1222 (TYKKRKNRKTLTSSNSSSNLIQQEDQTDYSP) are Cytoplasmic-facing. The span at 1202–1211 (LTSSNSSSNL) shows a compositional bias: low complexity. A disordered region spans residues 1202–1222 (LTSSNSSSNLIQQEDQTDYSP). Positions 1212–1222 (IQQEDQTDYSP) are enriched in polar residues.

Belongs to the glycosyl hydrolase 38 family. It depends on Zn(2+) as a cofactor.

It is found in the membrane. The catalysed reaction is Hydrolysis of terminal, non-reducing alpha-D-mannose residues in alpha-D-mannosides.. This Dictyostelium discoideum (Social amoeba) protein is Alpha-mannosidase D (manD).